The sequence spans 257 residues: S-methyl-5'-thioadenosine phosphorylase (257 aa).

Phosphate contacts are provided by residues Ser10, 50 to 51 (RH), and 83 to 84 (TA). Position 180 (Met180) interacts with substrate. Thr181 contacts phosphate. 204 to 206 (DYD) contacts substrate.

This sequence belongs to the PNP/MTAP phosphorylase family. MTAP subfamily. As to quaternary structure, homohexamer. Dimer of a homotrimer.

It carries out the reaction S-methyl-5'-thioadenosine + phosphate = 5-(methylsulfanyl)-alpha-D-ribose 1-phosphate + adenine. The catalysed reaction is adenosine + phosphate = alpha-D-ribose 1-phosphate + adenine. The protein operates within amino-acid biosynthesis; L-methionine biosynthesis via salvage pathway; S-methyl-5-thio-alpha-D-ribose 1-phosphate from S-methyl-5'-thioadenosine (phosphorylase route): step 1/1. In terms of biological role, catalyzes the reversible phosphorylation of S-methyl-5'-thioadenosine (MTA) to adenine and 5-methylthioribose-1-phosphate. Involved in the breakdown of MTA, a major by-product of polyamine biosynthesis. Responsible for the first step in the methionine salvage pathway after MTA has been generated from S-adenosylmethionine. Has broad substrate specificity with 6-aminopurine nucleosides as preferred substrates. Can also use adenosine as substrate to form ribose 1-phosphate. In Thermococcus kodakarensis (strain ATCC BAA-918 / JCM 12380 / KOD1) (Pyrococcus kodakaraensis (strain KOD1)), this protein is S-methyl-5'-thioadenosine phosphorylase.